The sequence spans 252 residues: 3-dehydroquinate dehydratase (252 aa).

3-dehydroquinate is bound by residues serine 21, 46-48, and arginine 82; that span reads EWR. The Proton donor/acceptor role is filled by histidine 143. Residue lysine 170 is the Schiff-base intermediate with substrate of the active site. 3-dehydroquinate-binding residues include arginine 213, serine 232, and glutamine 236.

It belongs to the type-I 3-dehydroquinase family. In terms of assembly, homodimer.

The catalysed reaction is 3-dehydroquinate = 3-dehydroshikimate + H2O. The protein operates within metabolic intermediate biosynthesis; chorismate biosynthesis; chorismate from D-erythrose 4-phosphate and phosphoenolpyruvate: step 3/7. In terms of biological role, involved in the third step of the chorismate pathway, which leads to the biosynthesis of aromatic amino acids. Catalyzes the cis-dehydration of 3-dehydroquinate (DHQ) and introduces the first double bond of the aromatic ring to yield 3-dehydroshikimate. The protein is 3-dehydroquinate dehydratase of Salmonella choleraesuis (strain SC-B67).